Consider the following 726-residue polypeptide: Probable pre-mRNA-splicing factor ATP-dependent RNA helicase DEAH2 (726 aa).

The region spanning 71–240 (LKTLNNNQTL…FSGAPLMKVP (170 aa)) is the Helicase ATP-binding domain. 84–91 (GETGSGKT) provides a ligand contact to ATP. The DEAH box motif lies at 187-190 (DEAH). The Helicase C-terminal domain occupies 265-445 (TVVQIHMCEP…NTVLTLKKLG (181 aa)).

This sequence belongs to the DEAD box helicase family. DEAH subfamily. PRP43 sub-subfamily.

The catalysed reaction is ATP + H2O = ADP + phosphate + H(+). Functionally, may be involved in pre-mRNA splicing. The chain is Probable pre-mRNA-splicing factor ATP-dependent RNA helicase DEAH2 from Arabidopsis thaliana (Mouse-ear cress).